The following is a 188-amino-acid chain: Adenylate kinase (188 aa).

Residue 11-16 (GAGKGT) participates in ATP binding. The tract at residues 31–60 (STGDIFRANIKDQTELGREAQRYTDAGNLV) is NMP. AMP-binding positions include T32, R37, 58–60 (NLV), 86–89 (GYPR), and Q93. An LID region spans residues 127–137 (GRAQEQGRTDD). Residue R128 coordinates ATP. AMP is bound by residues R134 and R145. ATP is bound at residue G173.

This sequence belongs to the adenylate kinase family. Monomer.

Its subcellular location is the cytoplasm. The catalysed reaction is AMP + ATP = 2 ADP. It functions in the pathway purine metabolism; AMP biosynthesis via salvage pathway; AMP from ADP: step 1/1. In terms of biological role, catalyzes the reversible transfer of the terminal phosphate group between ATP and AMP. Plays an important role in cellular energy homeostasis and in adenine nucleotide metabolism. The sequence is that of Adenylate kinase from Kocuria rhizophila (strain ATCC 9341 / DSM 348 / NBRC 103217 / DC2201).